Here is a 914-residue protein sequence, read N- to C-terminus: Effector protein hopAE1 (914 aa).

The span at 1 to 13 (MMPSQITRSSHSS) shows a compositional bias: polar residues. Positions 1–31 (MMPSQITRSSHSSLPEVAPASGDAAGVSEQT) are disordered.

It belongs to the HopW family.

The protein resides in the secreted. The protein is Effector protein hopAE1 (hopAE1) of Pseudomonas syringae pv. syringae (strain B728a).